The following is a 929-amino-acid chain: Isoleucine--tRNA ligase (929 aa).

The 'HIGH' region motif lies at 58–68; it reads PYANGDIHIGH. Glu563 lines the L-isoleucyl-5'-AMP pocket. The 'KMSKS' region motif lies at 605 to 609; that stretch reads KMSKS. Lys608 is an ATP binding site. Positions 892, 895, 912, and 915 each coordinate Zn(2+).

The protein belongs to the class-I aminoacyl-tRNA synthetase family. IleS type 1 subfamily. In terms of assembly, monomer. It depends on Zn(2+) as a cofactor.

Its subcellular location is the cytoplasm. It carries out the reaction tRNA(Ile) + L-isoleucine + ATP = L-isoleucyl-tRNA(Ile) + AMP + diphosphate. Functionally, catalyzes the attachment of isoleucine to tRNA(Ile). As IleRS can inadvertently accommodate and process structurally similar amino acids such as valine, to avoid such errors it has two additional distinct tRNA(Ile)-dependent editing activities. One activity is designated as 'pretransfer' editing and involves the hydrolysis of activated Val-AMP. The other activity is designated 'posttransfer' editing and involves deacylation of mischarged Val-tRNA(Ile). The protein is Isoleucine--tRNA ligase of Neisseria gonorrhoeae (strain ATCC 700825 / FA 1090).